A 431-amino-acid polypeptide reads, in one-letter code: MKASYQNHDLEMFFSTNLAQVDGAVNAGIEAELNRQNQQIELIASENIVSKAVMQAQGTCLTNKYAEGYAGHRYYGGCEHVDEVEKIAIARAKQLFQCEYVNVQPHSGAQANGAVMLALLQPGDTILGMSLDAGGHLTHGARPALSGKWFDAVQYGVNKDTLEIDYNQVRELAIEHKPKMIIAGGSAIPRIINFAKFREIADEVGAFLMVDMAHIAGLIAAGEHPSPIPHAHVITTTTHKTLRGPRGGMILTNLEDINKKINSAVFPGLQGGPLMHVIAGKAVAFGEALEPDFKIYIKNVISNAKVLAEVLQNRGCDIVTNGTDTHLMLVDLRPKGLKGNAAENALERAGITCNKNGIPFDTEKPMVTSGIRLGTPAGTSRGFGNDEFKQIGEWIGDVLDGLAANPEDNSEVEKHVKQQVQKLCSRFPLYQ.

Residues Leu131 and 135–137 each bind (6S)-5,6,7,8-tetrahydrofolate; that span reads GHL. Lys240 bears the N6-(pyridoxal phosphate)lysine mark.

The protein belongs to the SHMT family. Homodimer. The cofactor is pyridoxal 5'-phosphate.

It is found in the cytoplasm. The enzyme catalyses (6R)-5,10-methylene-5,6,7,8-tetrahydrofolate + glycine + H2O = (6S)-5,6,7,8-tetrahydrofolate + L-serine. It participates in one-carbon metabolism; tetrahydrofolate interconversion. Its pathway is amino-acid biosynthesis; glycine biosynthesis; glycine from L-serine: step 1/1. Functionally, catalyzes the reversible interconversion of serine and glycine with tetrahydrofolate (THF) serving as the one-carbon carrier. This reaction serves as the major source of one-carbon groups required for the biosynthesis of purines, thymidylate, methionine, and other important biomolecules. Also exhibits THF-independent aldolase activity toward beta-hydroxyamino acids, producing glycine and aldehydes, via a retro-aldol mechanism. The polypeptide is Serine hydroxymethyltransferase 2 (Photobacterium profundum (strain SS9)).